Reading from the N-terminus, the 120-residue chain is Immunoglobulin lambda variable 4-60 (120 aa).

The first 21 residues, 1–21, serve as a signal peptide directing secretion; sequence MAWTPLLLLFPLLLHCTGSLS. The segment at 22-46 is framework-1; it reads QPVLTQSSSASASLGSSVKLTCTLS. One can recognise an Ig-like domain in the interval 23–120; it reads PVLTQSSSAS…YYCETWDSNT (98 aa). An intrachain disulfide couples cysteine 43 to cysteine 113. Positions 47–53 are complementarity-determining-1; that stretch reads SGHSSYI. The interval 54–70 is framework-2; sequence IAWHQQQPGKAPRYLMK. Residues 71–77 are complementarity-determining-2; that stretch reads LEGSGSY. Residues 78–113 are framework-3; it reads NKGSGVPDRFSGSSSGADRYLTISNLQFEDEADYYC. The tract at residues 114–120 is complementarity-determining-3; the sequence is ETWDSNT.

In terms of assembly, immunoglobulins are composed of two identical heavy chains and two identical light chains; disulfide-linked.

The protein resides in the secreted. Its subcellular location is the cell membrane. V region of the variable domain of immunoglobulin light chains that participates in the antigen recognition. Immunoglobulins, also known as antibodies, are membrane-bound or secreted glycoproteins produced by B lymphocytes. In the recognition phase of humoral immunity, the membrane-bound immunoglobulins serve as receptors which, upon binding of a specific antigen, trigger the clonal expansion and differentiation of B lymphocytes into immunoglobulins-secreting plasma cells. Secreted immunoglobulins mediate the effector phase of humoral immunity, which results in the elimination of bound antigens. The antigen binding site is formed by the variable domain of one heavy chain, together with that of its associated light chain. Thus, each immunoglobulin has two antigen binding sites with remarkable affinity for a particular antigen. The variable domains are assembled by a process called V-(D)-J rearrangement and can then be subjected to somatic hypermutations which, after exposure to antigen and selection, allow affinity maturation for a particular antigen. This Homo sapiens (Human) protein is Immunoglobulin lambda variable 4-60.